A 351-amino-acid polypeptide reads, in one-letter code: MAIPQASMGPSSLGQSGPGSMAPWCSVSSGPTRYVLGMQELFRGHSKTREFPAHSAKVHSVAWSCDGRRLASGSFDKTASVFLLEKDRLVKENNYRGHGDSVDQLCWHPSNPDLFVTASGDKTIRIWDVRTTKCIATVNTKGENINICWSPDGQTIAVGNKDDVVTFIDAKTHRSKAEEQFKFEVNEISWNNDNNMFFLTNGNGCINILSYPELKPVQSINAHPSNCICIKFDPMGKYFATGSADALVSLWDVDELVCVRCFSRLDWPVRTLSFSHDGKMLASASEDHFIDIAEVETGDKLWEVQCESPTFTVAWHPKRPLLAFACDDKDGKYDSSREAGTVKLFGLPNDS.

A disordered region spans residues 1 to 22; sequence MAIPQASMGPSSLGQSGPGSMA. Alanine 2 bears the N-acetylalanine mark. The segment covering 7 to 21 has biased composition (low complexity); the sequence is SMGPSSLGQSGPGSM. 6 WD repeats span residues 53–94, 97–137, 139–178, 180–221, 222–261, and 264–303; these read AHSA…KENN, GHGD…CIAT, NTKGENINICWSPDGQTIAVGNKDDVVTFIDAKTHRSKAE, QFKF…QSIN, AHPSNCICIKFDPMGKYFATGSADALVSLWDVDELVCVRC, and RLDWPVRTLSFSHDGKMLASASEDHFIDIAEVETGDKLWE.

This sequence belongs to the THOC3 family. Component of the THO subcomplex, which is composed of THOC1, THOC2, THOC3, THOC5, THOC6 and THOC7. The THO subcomplex interacts with DDX39B to form the THO-DDX39B complex which multimerizes into a 28-subunit tetrameric assembly. Component of the transcription/export (TREX) complex at least composed of ALYREF/THOC4, DDX39B, SARNP/CIP29, CHTOP and the THO subcomplex; in the complex interacts with THOC2. TREX seems to have a dynamic structure involving ATP-dependent remodeling.

The protein localises to the nucleus. It is found in the nucleus speckle. Its function is as follows. Component of the THO subcomplex of the TREX complex which is thought to couple mRNA transcription, processing and nuclear export, and which specifically associates with spliced mRNA and not with unspliced pre-mRNA. Required for efficient export of polyadenylated RNA and spliced mRNA. The THOC1-THOC2-THOC3 core complex alone is sufficient to bind export factor NXF1-NXT1 and promote ATPase activity of DDX39B. TREX is recruited to spliced mRNAs by a transcription-independent mechanism, binds to mRNA upstream of the exon-junction complex (EJC) and is recruited in a splicing- and cap-dependent manner to a region near the 5' end of the mRNA where it functions in mRNA export to the cytoplasm via the TAP/NXF1 pathway. The chain is THO complex subunit 3 (THOC3) from Bos taurus (Bovine).